We begin with the raw amino-acid sequence, 109 residues long: Large ribosomal subunit protein uL18c (109 aa).

It belongs to the universal ribosomal protein uL18 family. In terms of assembly, part of the 50S ribosomal subunit; contacts the 5S rRNA.

The protein localises to the plastid. It localises to the chloroplast. Binds 5S rRNA, forms part of the central protuberance of the 50S subunit. This is Large ribosomal subunit protein uL18c (rpl18) from Cyanidioschyzon merolae (strain NIES-3377 / 10D) (Unicellular red alga).